Consider the following 414-residue polypeptide: Nucleoredoxin (414 aa).

Residues leucine 131–glycine 305 form the Thioredoxin domain.

It belongs to the nucleoredoxin family.

Its subcellular location is the cytoplasm. The protein resides in the cytosol. It localises to the nucleus. It catalyses the reaction [protein]-dithiol + NAD(+) = [protein]-disulfide + NADH + H(+). The catalysed reaction is [protein]-dithiol + NADP(+) = [protein]-disulfide + NADPH + H(+). Its function is as follows. Functions as a redox-dependent negative regulator of the Wnt signaling pathway. The chain is Nucleoredoxin (nxn) from Xenopus laevis (African clawed frog).